Reading from the N-terminus, the 1506-residue chain is MAKQGSKEKKGYPELKEVIKATCKIRVGPGKETLTEGNCLWALKTIDFIFEDLKTEPWTITKMYTVWDRLKGLTPEETSKREFASLQATLACIMCSQMGMKPETVQAAKGIISMKEGLHENKEAKGEKVEQLYPNLEKHREVYPIVNLQAGGRSWKAVESVVFQQLQTVAMQHGLVSEDFERQLAYYATTWTSKDILEVLAMMPGNRAQKELIQGKLNEEAERWVRQNPPGPNVLTVDQIMGVGQTNQQASQANMDQARQICLQWVITALRSVRHMSHRPGNPMLVKQKNTESYEDFIARLLEAIDAEPVTDPIKTYLKVTLSYTNASTDCQKQMDRTLGTRVQQATVEEKMQACRDVGSEGFKMQLLAQALRPQGKAGQKGVNQKCYNCGKPGHLARQCRQGIICHHCGKRGHMQKDCRQKKQQGKQQEGATCGAVRAPYVVTEAPPKIEIKVGTRWKKLLVDTGADKTIVTSHDMSGIPKGRIILQGIGGIIEGEKWEQVHLQYKDKIIRGTIVVLATSPVEVLGRDNMRELGIGLIMANLEEKKIPSTRVRLKEGCKGPHIAQWPLTQEKLEGLKEIVDRLEKEGKVGRAPPHWTCNTPIFCIKKKSGKWRMLIDFRELNKQTEDLAEAQLGLPHPGGLQRKKHVTILDIGDAYFTIPLYEPYRQYTCFTMLSPNNLGPCVRYYWKVLPQGWKLSPAVYQFTMQKILRGWIEEHPMIQFGIYMDDIYIGSDLGLEEHRGIVNELASYIAQYGFMLPEDKRQEGYPAKWLGFELHPEKWKFQKHTLPEITEGPITLNKLQKLVGDLVWRQSLIGKSIPNILKLMEGDRALQSERYIESIHVREWEACRQKLKEMEGNYYDEEKDIYGQLDWGNKAIEYIVFQEKGKPLWVNVVHSIKNLSQAQQIIKAAQKLTQEVIIRTGKIPWILLPGREEDWILELQMGNINWMPSFWSCYKGSVRWKKRNVIAEVVPGPTYYTDGGKKNGRGSLGYITSTGEKFRIHEEGTNQQLELRAIEEACKQGPEKMNIVTDSRYAYEFMLRNWDEEVIRNPIQARIMELVHNKEKIGVHWVPGHKGIPQNEEIDRYISEIFLAKEGRGILQKRAEDAGYDLICPQEISIPAGQVKRIAIDLKINLKKDQWAMIGTKSSFANKGVFVQGGIIDSGYQGTIQVVIYNSNNKEVVIPQGRKFAQLILMPLIHEELEPWGETRKTERGEQGFGSTGMYWIENIPLAEEEHNKWHQDAVSLHLEFGIPRTAAEDIVQQCDVCQENKMPSTLRGSNKRGIDHWQVDYTHYEDKIILVWVETNSGLIYAERVKGETGQEFRVQTMKWYAMFAPKSLQSDNGPAFVAESTQLLMKYLGIEHTTGIPWNPQSQALVERTHQTLKNTLEKLIPMFNAFESALAGTLITLNIKRKGGLGTSPMDIFIFNKEQQRIQQQSKSKQEKIRFCYYRTRKRGHPGEWQGPTQVLWGGDGAIVVKDRGTDRYLVIANKDVKFIPPPKEIQKE.

CCHC-type zinc fingers lie at residues 385–402 (QKCY…QCRQ) and 404–421 (IICH…DCRQ). Residues 459 to 530 (KKLLVDTGAD…SPVEVLGRDN (72 aa)) form the Peptidase A2 domain. The active-site Protease; shared with dimeric partner is aspartate 464. One can recognise a Reverse transcriptase domain in the interval 587–776 (EGKVGRAPPH…YPAKWLGFEL (190 aa)). Residues aspartate 652, aspartate 727, aspartate 728, aspartate 980, glutamate 1012, aspartate 1032, and aspartate 1085 each contribute to the Mg(2+) site. Residues 971–1093 (VVPGPTYYTD…IDRYISEIFL (123 aa)) enclose the RNase H type-1 domain. The Integrase-type zinc-finger motif lies at 1228-1269 (ENIPLAEEEHNKWHQDAVSLHLEFGIPRTAAEDIVQQCDVCQ). Zn(2+) contacts are provided by histidine 1237, histidine 1241, cysteine 1265, and cysteine 1268. In terms of domain architecture, Integrase catalytic spans 1270 to 1430 (ENKMPSTLRG…SPMDIFIFNK (161 aa)). Mg(2+)-binding residues include aspartate 1291, aspartate 1343, and glutamate 1379. Residues 1447 to 1499 (RFCYYRTRKRGHPGEWQGPTQVLWGGDGAIVVKDRGTDRYLVIANKDVKFIPP) constitute a DNA-binding region (integrase-type).

Belongs to the retroviral Pol polyprotein family. Homotetramer; further associates as a homohexadecamer. Mg(2+) is required as a cofactor. Post-translationally, specific enzymatic cleavages by the viral protease yield mature proteins.

It localises to the virion. It carries out the reaction 3'-end directed exonucleolytic cleavage of viral RNA-DNA hybrid.. The catalysed reaction is Endonucleolytic cleavage to 5'-phosphomonoester.. The enzyme catalyses dUTP + H2O = dUMP + diphosphate + H(+). It catalyses the reaction DNA(n) + a 2'-deoxyribonucleoside 5'-triphosphate = DNA(n+1) + diphosphate. Functionally, mediates, with Gag polyprotein, the essential events in virion assembly, including binding the plasma membrane, making the protein-protein interactions necessary to create spherical particles, recruiting the viral Env proteins, and packaging the genomic RNA via direct interactions with the RNA packaging sequence. Its function is as follows. Targets the polyprotein to the plasma membrane. Forms the core that encapsulates the genomic RNA-nucleocapsid complex in the virion. In terms of biological role, encapsulates and protects viral dimeric unspliced genomic RNA (gRNA). Binds these RNAs through its zinc fingers. Acts as a nucleic acid chaperone which is involved in rearrangement of nucleic acid secondary structure during gRNA retrotranscription. Also facilitates template switch leading to recombination. Functionally, the aspartyl protease mediates proteolytic cleavages of Gag and Gag-Pol polyproteins during or shortly after the release of the virion from the plasma membrane. Cleavages take place as an ordered, step-wise cascade to yield mature proteins. This process is called maturation. Displays maximal activity during the budding process just prior to particle release from the cell. Its function is as follows. RT is a multifunctional enzyme that converts the viral dimeric RNA genome into dsDNA in the cytoplasm, shortly after virus entry into the cell. This enzyme displays a DNA polymerase activity that can copy either DNA or RNA templates, and a ribonuclease H (RNase H) activity that cleaves the RNA strand of RNA-DNA heteroduplexes in a partially processive 3' to 5' endonucleasic mode. Conversion of viral genomic RNA into dsDNA requires many steps. A tRNA binds to the primer-binding site (PBS) situated at the 5' end of the viral RNA. RT uses the 3' end of the tRNA primer to perfom a short round of RNA-dependent minus-strand DNA synthesis. The reading proceeds through the U5 region and ends after the repeated (R) region which is present at both ends of viral RNA. The portion of the RNA-DNA heteroduplex is digested by the RNase H, resulting in a ssDNA product attached to the tRNA primer. This ssDNA/tRNA hybridizes with the identical R region situated at the 3' end of viral RNA. This template exchange, known as minus-strand DNA strong stop transfer, can be either intra- or intermolecular. RT uses the 3' end of this newly synthesized short ssDNA to perfom the RNA-dependent minus-strand DNA synthesis of the whole template. RNase H digests the RNA template except for a polypurine tract (PPT) situated at the 5' end of the genome. It is not clear if both polymerase and RNase H activities are simultaneous. RNase H probably can proceed both in a polymerase-dependent (RNA cut into small fragments by the same RT performing DNA synthesis) and a polymerase-independent mode (cleavage of remaining RNA fragments by free RTs). Secondly, RT performs DNA-directed plus-strand DNA synthesis using the PPT that has not been removed by RNase H as primers. PPT and tRNA primers are then removed by RNase H. The 3' and 5' ssDNA PBS regions hybridize to form a circular dsDNA intermediate. Strand displacement synthesis by RT to the PBS and PPT ends produces a blunt ended, linear dsDNA copy of the viral genome that includes long terminal repeats (LTRs) at both ends. Catalyzes viral DNA integration into the host chromosome, by performing a series of DNA cutting and joining reactions. In Maedi visna virus (strain KV1772) (MVV), this protein is Gag-Pol polyprotein (pol).